Consider the following 533-residue polypeptide: Cytochrome P450 monooxygenase ltmK (533 aa).

The helical transmembrane segment at 27–47 threads the bilayer; the sequence is VHWLQVIVALLVLIVCIFLYW. An N-linked (GlcNAc...) asparagine glycan is attached at N116. Residue C473 participates in heme binding. N528 carries N-linked (GlcNAc...) asparagine glycosylation.

It belongs to the cytochrome P450 family. Heme is required as a cofactor.

It is found in the membrane. Its pathway is secondary metabolite biosynthesis. Cytochrome P450 monooxygenase; part of the gene clusters that mediates the biosynthesis of lolitrems, indole-diterpene mycotoxins that are potent tremorgens in mammals, and are synthesized by clavicipitaceous fungal endophytes in association with their grass hosts. The geranylgeranyl diphosphate (GGPP) synthase ltmG is proposed to catalyze the first step in lolitrem biosynthesis. LtmG catalyzes a series of iterative condensations of isopentenyl diphosphate (IPP) with dimethylallyl diphosphate (DMAPP), geranyl diphosphate (GPP), and farnesyl diphosphate (FPP), to form GGPP. GGPP then condenses with indole-3-glycerol phosphate to form 3-geranylgeranylindole, an acyclic intermediate, to be incorporated into paxilline. Either ltmG or ltmC could be responsible for this step, as both are putative prenyl transferases. The FAD-dependent monooxygenase ltmM then catalyzes the epoxidation of the two terminal alkenes of the geranylgeranyl moiety, which is subsequently cyclized by ltmB, to paspaline. The cytochrome P450 monooxygenases ltmQ and ltmP can sequentially oxidize paspaline to terpendole E and terpendole F. Alternatively, ltmP converts paspaline to an intermediate which is oxidized by ltmQ to terpendole F. LtmF, ltmK, ltmE and ltmJ appear to be unique to the epichloe endophytes. The prenyltransferase ltmF is involved in the 27-hydroxyl-O-prenylation. The cytochrome P450 monooxygenase ltmK is required for the oxidative acetal ring formation. The multi-functional prenyltransferase ltmE is required for C20- and C21-prenylations of the indole ring of paspalanes and acts together with the cytochrome P450 monooxygenase ltmJ to yield lolitremanes by multiple oxidations and ring closures. The stereoisomer pairs of lolitriol and lolitrem N or lolitrem B and lolitrem F may be attributed to variations in the way in which ring closure can occur under the action of ltmJ. While the major product of this pathway is lolitrem B, the prenyl transferases and cytochrome P450 monooxygenases identified in this pathway have a remarkable versatility in their regio- and stereo-specificities to generate a diverse range of metabolites that are products of a metabolic grid rather than a linear pathway. This chain is Cytochrome P450 monooxygenase ltmK, found in Epichloe festucae var. lolii (Neotyphodium lolii).